A 771-amino-acid polypeptide reads, in one-letter code: MAPGGGGGRRDGWPARGRLLLAALLLLWTRAASGQSSPQQSVILGMRLASCNKSCGMNPDGIIFVSEGSTVNLRLYGHSLGDISSNLISFTEVDDAEAVHNSTNCLELTKDLVVQRLVNVSRGNTSGMLVVITKFLRRSENMKLYALCTRPRADGPWTRWTDKDSLLFMVEEHGRFLPLWLHILLVMVLLVLSGIFSGLNLGLMALDPMELRIVQNCGTEKERKYARKIEPIRRKGNYLLCSLLLGNVLVNTSLTILLDNLIGSGIMAVASSTIGIVIFGEILPQALCSRHGLAVGANTIVLTKVFMLLTFPLSFPISKLLDFVLGQEIRTVYNREKLMEMLKVTEPYNDLVKEELNMIQGALELRTKTVEDIMTQLHDCFMIRSDAILDFNTMSEIMESGYTRIPVFEDEQSNIVDILYVKDLAFVDPDDCTPLKTITRFYNHPVHFVFHDTKLDAMLEEFKKGKSHLAIVQKVNNEGEGDPFYEVLGLVTLEDVIEEIIKSEILDESDMYTDNRTRKRVSVKNKRDFSAFKDTDNELKVKISPQLLLAAHRFLATEVPQFSPSLMSEKILLRLLKYPDVIQELRFNEHNRYCVRHYLYTRNKPADCFVLILQGKVEVEAGKENMKFETGAFSYYGTMALSVAPPDRSPALPTPLSRSASLSYPDRNTDLTSTSLAGSNQFGSCILGQYVSDFSVRALTDLQYIKITRQQYQNGLMASRMDNSPQPTFDGCATCSENFMERPELPPVDETTTLLNERNSLLHRASEEETI.

Topologically, residues 1 to 175 (MAPGGGGGRR…LLFMVEEHGR (175 aa)) are extracellular. A glycan (N-linked (GlcNAc...) asparagine) is linked at Asn-119. Residues 175 to 355 (RFLPLWLHIL…EPYNDLVKEE (181 aa)) enclose the CNNM transmembrane domain. A helical membrane pass occupies residues 176 to 196 (FLPLWLHILLVMVLLVLSGIF). The Cytoplasmic portion of the chain corresponds to 197–237 (SGLNLGLMALDPMELRIVQNCGTEKERKYARKIEPIRRKGN). The helical intramembrane region spans 238–258 (YLLCSLLLGNVLVNTSLTILL). Residues 259–261 (DNL) are Cytoplasmic-facing. A helical membrane pass occupies residues 262 to 282 (IGSGIMAVASSTIGIVIFGEI). Residues 283–290 (LPQALCSR) lie on the Extracellular side of the membrane. A helical transmembrane segment spans residues 291–313 (HGLAVGANTIVLTKVFMLLTFPL). Residues 314–771 (SFPISKLLDF…LHRASEEETI (458 aa)) are Cytoplasmic-facing. CBS domains lie at 374–435 (MTQL…CTPL) and 442–508 (YNHP…ILDE). Phosphoserine occurs at positions 657, 661, and 766.

This sequence belongs to the ACDP family. Interacts with COX11. As to expression, cornea, retina, teeth (at protein level). In the retina it is predominantly localized to the outer plexiform layer, inner plexiform layer and ganglion cell layer. In the tooth strongest expression is observed in the cell body of the ameloblasts. Expressed at high levels in the gastrointestinal tract and testis.

It is found in the cell membrane. Probable metal transporter. The interaction with the metal ion chaperone COX11 suggests that it may play a role in sensory neuron functions. May play a role in biomineralization and retinal function. The chain is Metal transporter CNNM4 (Cnnm4) from Mus musculus (Mouse).